Here is a 325-residue protein sequence, read N- to C-terminus: GMP reductase (325 aa).

Catalysis depends on Cys-173, which acts as the Thioimidate intermediate. 202–225 (IIADGGIRHHGDIAKSVRFGAAMV) lines the NADP(+) pocket.

This sequence belongs to the IMPDH/GMPR family. GuaC type 2 subfamily.

The catalysed reaction is IMP + NH4(+) + NADP(+) = GMP + NADPH + 2 H(+). Catalyzes the irreversible NADPH-dependent deamination of GMP to IMP. It functions in the conversion of nucleobase, nucleoside and nucleotide derivatives of G to A nucleotides, and in maintaining the intracellular balance of A and G nucleotides. In Leptothrix cholodnii (strain ATCC 51168 / LMG 8142 / SP-6) (Leptothrix discophora (strain SP-6)), this protein is GMP reductase.